Reading from the N-terminus, the 177-residue chain is MERKQGEVDHLERSRPLTDKERVMIQDSWAKVYQNCDDAGVAILVRLFVNFPSSKQYFSQFKHIEDAEELEKSSQLRKHARRVMNAINTLVESLDNSDKVSSVLNAVGKAHAIRHKVDPVYFKILSGVILEVLGEAYPQVMTAEVASAWTNLLAILCCSIKAVYEELGWPHLSNSTS.

The region spanning 16–165 is the Globin domain; the sequence is PLTDKERVMI…LCCSIKAVYE (150 aa). The heme b site is built by His79 and His111.

Belongs to the globin family. As to quaternary structure, monomeric.

Its subcellular location is the cytoplasm. The protein localises to the nucleus. It carries out the reaction Fe(II)-heme b-[protein] + nitric oxide + O2 = Fe(III)-heme b-[protein] + nitrate. It catalyses the reaction Fe(III)-heme b-[protein] + nitric oxide + H2O = Fe(II)-heme b-[protein] + nitrite + 2 H(+). The enzyme catalyses 2 superoxide + 2 H(+) = H2O2 + O2. The catalysed reaction is H2O2 + AH2 = A + 2 H2O. In terms of biological role, probable multifunctional globin with a hexacoordinated heme iron required for the catalysis of various reactions depending on redox condition of the cell as well as oxygen availability. Has a nitric oxide dioxygenase (NOD) activity and is most probably involved in cell-mediated and oxygen-dependent nitric oxide consumption. Under normoxic conditions functions as a nitric oxide dioxygenase (NOD) but under hypoxic conditions the globin may switch its function to that of a nitrite (NO2) reductase (NiR), generating nitric oxide. Could also have peroxidase and superoxide dismutase activities, detoxifying reactive oxygen species and protecting cells against oxidative stress. Also binds dioxygen with low affinity and could function as an oxygen sensor but has probably no function as a respiratory oxygen carrier. The sequence is that of Cytoglobin-1 from Oryzias latipes (Japanese rice fish).